A 378-amino-acid chain; its full sequence is UDP-N-acetylglucosamine--N-acetylmuramyl-(pentapeptide) pyrophosphoryl-undecaprenol N-acetylglucosamine transferase (378 aa).

Residues 14-16 (TGG), Asn-125, Arg-165, Ser-193, and Gln-293 contribute to the UDP-N-acetyl-alpha-D-glucosamine site.

This sequence belongs to the glycosyltransferase 28 family. MurG subfamily.

The protein resides in the cell inner membrane. The enzyme catalyses di-trans,octa-cis-undecaprenyl diphospho-N-acetyl-alpha-D-muramoyl-L-alanyl-D-glutamyl-meso-2,6-diaminopimeloyl-D-alanyl-D-alanine + UDP-N-acetyl-alpha-D-glucosamine = di-trans,octa-cis-undecaprenyl diphospho-[N-acetyl-alpha-D-glucosaminyl-(1-&gt;4)]-N-acetyl-alpha-D-muramoyl-L-alanyl-D-glutamyl-meso-2,6-diaminopimeloyl-D-alanyl-D-alanine + UDP + H(+). It functions in the pathway cell wall biogenesis; peptidoglycan biosynthesis. In terms of biological role, cell wall formation. Catalyzes the transfer of a GlcNAc subunit on undecaprenyl-pyrophosphoryl-MurNAc-pentapeptide (lipid intermediate I) to form undecaprenyl-pyrophosphoryl-MurNAc-(pentapeptide)GlcNAc (lipid intermediate II). The chain is UDP-N-acetylglucosamine--N-acetylmuramyl-(pentapeptide) pyrophosphoryl-undecaprenol N-acetylglucosamine transferase from Bartonella quintana (strain Toulouse) (Rochalimaea quintana).